We begin with the raw amino-acid sequence, 155 residues long: Cell division protein SepF (155 aa).

The span at 22 to 46 shows a compositional bias: basic and acidic residues; the sequence is RYVEEPEQRDERPALEKGRAPKEKQ. Positions 22-54 are disordered; sequence RYVEEPEQRDERPALEKGRAPKEKQTAGMEQNQ.

It belongs to the SepF family. Homodimer. Interacts with FtsZ.

The protein resides in the cytoplasm. Cell division protein that is part of the divisome complex and is recruited early to the Z-ring. Probably stimulates Z-ring formation, perhaps through the cross-linking of FtsZ protofilaments. Its function overlaps with FtsA. The chain is Cell division protein SepF from Shouchella clausii (strain KSM-K16) (Alkalihalobacillus clausii).